Reading from the N-terminus, the 429-residue chain is Putative protease Do-like 14 (429 aa).

The segment at 87–113 (KSEAPINDEKGVSVEASDSSSKPSNGY) is disordered. The segment at 113–338 (YLGRDTIANA…IRPWIGLKMV (226 aa)) is serine protease. Residues histidine 165, aspartate 203, and serine 281 each act as charge relay system in the active site. A PDZ domain is found at 318 to 424 (IIEHFKKSGR…RVTLEVIPEE (107 aa)).

The protein belongs to the peptidase S1C family.

In terms of biological role, putative serine protease. In Arabidopsis thaliana (Mouse-ear cress), this protein is Putative protease Do-like 14 (DEGP14).